The following is a 141-amino-acid chain: Large ribosomal subunit protein uL11 (141 aa).

Belongs to the universal ribosomal protein uL11 family. Part of the ribosomal stalk of the 50S ribosomal subunit. Interacts with L10 and the large rRNA to form the base of the stalk. L10 forms an elongated spine to which L12 dimers bind in a sequential fashion forming a multimeric L10(L12)X complex. One or more lysine residues are methylated.

In terms of biological role, forms part of the ribosomal stalk which helps the ribosome interact with GTP-bound translation factors. The sequence is that of Large ribosomal subunit protein uL11 from Limosilactobacillus reuteri (strain DSM 20016) (Lactobacillus reuteri).